A 378-amino-acid chain; its full sequence is Envelope glycoprotein M (378 aa).

The Intravirion portion of the chain corresponds to 1 to 16; sequence MKSSKSDLFIYKTWFK. A helical transmembrane segment spans residues 17 to 37; the sequence is LLVLYFVMFVLSATVPIAASF. At 38–84 the chain is on the virion surface side; it reads PGLGFPCYYNALVNYSAINLTERNVAKHLTPTLYLEEPEMFAYMTFT. Residues 85–105 traverse the membrane as a helical segment; that stretch reads FLVDCFAAVYYFLGALAIMLA. The Intravirion portion of the chain corresponds to 106–118; it reads KRHFVVSLTTLSQ. The chain crosses the membrane as a helical span at residues 119-139; that stretch reads WIAMVGTPTLILIGMWRMWTI. Over 140–150 the chain is Virion surface; it reads QLFIQTLSYKH. A helical transmembrane segment spans residues 151 to 171; that stretch reads IYLSAFVYLIHFLLSFLHTQC. Residues 172–210 lie on the Intravirion side of the membrane; it reads YISRNSQLWSLKVLEQGIPPNTLLDTVVFTIKPLLANCQ. A helical transmembrane segment spans residues 211 to 231; it reads LFCLGLEMLVFSLSFMMAIGN. At 232-239 the chain is on the virion surface side; that stretch reads SFYVLVSD. The chain crosses the membrane as a helical span at residues 240 to 260; it reads IVFGAINLYLALVLFWVLLTE. The Intravirion segment spans residues 261–268; sequence LYLVKYMT. Residues 269-289 traverse the membrane as a helical segment; sequence FVMGFYLGGLIGCIFLLVPLW. The Virion surface segment spans residues 290–303; sequence RYEQIFVAANLRSP. A helical transmembrane segment spans residues 304–324; it reads ILINILVIFFLCTLSALVRLL. The Intravirion portion of the chain corresponds to 325–378; that stretch reads RMTWFSPTKPSYEPIQLKNIKHRRVKLQSPSGPSILEEGSSDEGSEDSEEEEEL. Positions 347-378 are disordered; sequence RRVKLQSPSGPSILEEGSSDEGSEDSEEEEEL. Positions 363-378 are enriched in acidic residues; the sequence is GSSDEGSEDSEEEEEL.

This sequence belongs to the herpesviridae glycoprotein M family. Interacts (via N-terminus) with gN (via N-terminus). The gM-gN heterodimer forms the gCII complex.

The protein localises to the virion membrane. It localises to the host Golgi apparatus. The protein resides in the host trans-Golgi network. It is found in the host endosome membrane. Its subcellular location is the host nucleus inner membrane. Functionally, envelope glycoprotein important for virion assembly and egress. Plays a role in the correct incorporation of gH-gL into virion membrane. Directs the glycoprotein N (gN) to the host trans-Golgi network. The sequence is that of Envelope glycoprotein M from Equus caballus (Horse).